A 198-amino-acid polypeptide reads, in one-letter code: Mitrocomin (198 aa).

The propeptide occupies Met1–Ala8. EF-hand domains follow at residues Lys19–Lys54, Asp118–Gln147, and Gln148–Ser183. Ca(2+) contacts are provided by Asp32, Asn34, Asn36, Gln38, Glu43, Asp125, Asp127, Asn129, Ser131, Glu136, Asp161, Asp163, Asp165, Lys167, and Glu172.

The protein belongs to the aequorin family.

Its function is as follows. Ca(2+)-dependent bioluminescence photoprotein. Displays an emission peak at 470 nm (blue light). Trace amounts of calcium ion trigger the intramolecular oxidation of the chromophore, coelenterazine into coelenteramide and CO(2) with the concomitant emission of light. The protein is Mitrocomin (MI17) of Mitrocoma cellularia (Cross jellyfish).